A 537-amino-acid polypeptide reads, in one-letter code: uncharacterized protein (537 aa).

Disordered stretches follow at residues 1–33 (MEPGSKLSEDETFSQTFNEEEQEDSRNKDILAF), 71–98 (SSPPSVRVPRSRRNRRNSRVDSEARKRQ), 197–220 (SHNNMASSNTQSNTQLSEMESEEK), and 516–537 (GRQRSSRYKSHVHKTNTSEEQN). Ser72 carries the post-translational modification Phosphoserine. Residues 88–98 (SRVDSEARKRQ) show a composition bias toward basic and acidic residues. The segment covering 197-214 (SHNNMASSNTQSNTQLSE) has biased composition (polar residues). A compositionally biased stretch (basic residues) spans 516-529 (GRQRSSRYKSHVHK).

Belongs to the NAD kinase family.

This is an uncharacterized protein from Schizosaccharomyces pombe (strain 972 / ATCC 24843) (Fission yeast).